We begin with the raw amino-acid sequence, 151 residues long: UPF0178 protein GSU0171 (151 aa).

This sequence belongs to the UPF0178 family.

The protein is UPF0178 protein GSU0171 of Geobacter sulfurreducens (strain ATCC 51573 / DSM 12127 / PCA).